The sequence spans 142 residues: Protein KNATM (142 aa).

Residues 4–36 adopt a coiled-coil conformation; that stretch reads KKDENSILENMKQEINHSLKEEAQEEEEILKKR.

As to quaternary structure, interacts with KNAT1, KNAT3, KNAT4, BEL1, BLH2, BLH4 and BLH9, but not with BLH8 or the KNATM-A and KNATM-C isoforms. Isoforms KNATM-A and KNATM-C: no interactions with KNATM-B, KNOXX or BELL proteins. In terms of tissue distribution, detected in inflorescences, seedlings, leaves, hydathodes, stems, roots, embryo and siliques. Expressed in a polar pattern in organ primordia and at the boundary of mature organs. Detected in the lateral domains of flower meristems, but not in the inflorescence meristem or the vegetative shoot apical meristem.

The protein localises to the cytoplasm. It localises to the nucleus. Functionally, transcriptional regulator involved in leaf proximal/distal patterning. May act by sequestering BELL transcription factors. In Arabidopsis thaliana (Mouse-ear cress), this protein is Protein KNATM.